The following is an 885-amino-acid chain: Exosome complex component 10 (885 aa).

A Glycyl lysine isopeptide (Lys-Gly) (interchain with G-Cter in SUMO2) cross-link involves residue K19. The 3'-5' exonuclease domain occupies 289-455; it reads HFISSLDELV…YIYDKMRLEM (167 aa). Mg(2+)-binding residues include D313, E315, D371, and D440. In terms of domain architecture, HRDC spans 503-583; the sequence is NTQQLTAFQL…QQAREMPLLK (81 aa). K583 is covalently cross-linked (Glycyl lysine isopeptide (Lys-Gly) (interchain with G-Cter in SUMO1); alternate). A Glycyl lysine isopeptide (Lys-Gly) (interchain with G-Cter in SUMO2); alternate cross-link involves residue K583. K710 is covalently cross-linked (Glycyl lysine isopeptide (Lys-Gly) (interchain with G-Cter in SUMO2)). Basic and acidic residues-rich tracts occupy residues 776 to 794 and 804 to 816; these read AAKK…EQKQ and KPKD…KEFT. Positions 776–885 are disordered; sequence AAKKRERATS…RGFRYNWPQR (110 aa). At S821 the chain carries Phosphoserine. Residues K826, K833, and K859 each participate in a glycyl lysine isopeptide (Lys-Gly) (interchain with G-Cter in SUMO2) cross-link. Residues 831–848 show a composition bias toward polar residues; that stretch reads NSKSKVSSQFDPNKQTPS. Residues 861-871 show a composition bias toward polar residues; sequence SVGNKSMSFPT. K873 is covalently cross-linked (Glycyl lysine isopeptide (Lys-Gly) (interchain with G-Cter in SUMO2)).

The protein belongs to the exosome component 10/RRP6 family. As to quaternary structure, component of the RNA exosome complex. The catalytically inactive RNA exosome core complex (Exo-9) associates with the catalytic subunit EXOSC10/RRP6 (via its N-terminus). Exo-9 may associate with DIS3 to form the nucleolar exosome complex, or DIS3L to form the cytoplasmic exosome complex. The RNA exosome complex interacts with cofactors C1D/RRP47, MPHOSPH6/MPP6 and MTREX/MTR4. Interacts with MTREX; the interaction with MTREX mediates the association of MTREX with nuclear RNA exosomes. Part of the small subunit (SSU) processome, composed of more than 70 proteins and the RNA chaperone small nucleolar RNA (snoRNA) U3. Interacts with ALYREF/THOC4. Interacts with DHX36; this interaction occurs in a RNase-insensitive manner. Interacts with NRDE2. Interacts (via C-terminus) with USP36 (via C-terminus); the interaction is facilitated by the association with RNA and promotes sumoylation of EXOSC10. Requires Mg(2+) as cofactor. Post-translationally, sumoylated by USP36; sumoylation does not significantly affect EXOSC10 nucleolar localization and association with core exosome and USP36, but regulates the nucleolar RNA exosome activity in rRNA processing by promoting binding of EXOSC10 to pre-rRNAs. Effects of sumoylation on EXOSC10 levels vary between different studies. Sumoylation of EXOSC10 is required for the modulation of EXOSC10 effects on cellular protein translation and cell proliferation. Sumoylation is promoted by mild hypothermia.

Its subcellular location is the cytoplasm. The protein resides in the nucleus. It is found in the nucleolus. The protein localises to the nucleoplasm. With respect to regulation, arginine-rich dipeptide repeat proteins expressed from C9orf72-derived repeat RNA interact with EXOSC10 and inhibit its ability to promote degradation of this RNA. Functionally, catalytic component of the RNA exosome complex which has 3'-&gt;5' exoribonuclease activity and participates in a multitude of cellular RNA processing and degradation events. In the nucleus, the RNA exosome complex is involved in proper maturation of stable RNA species such as rRNA, snRNA and snoRNA, in the elimination of RNA processing by-products and non-coding 'pervasive' transcripts, such as antisense RNA species and promoter-upstream transcripts (PROMPTs), and of mRNAs with processing defects, thereby limiting or excluding their export to the cytoplasm. Part of the small subunit (SSU) processome, first precursor of the small eukaryotic ribosomal subunit. During the assembly of the SSU processome in the nucleolus, many ribosome biogenesis factors, an RNA chaperone and ribosomal proteins associate with the nascent pre-rRNA and work in concert to generate RNA folding, modifications, rearrangements and cleavage as well as targeted degradation of pre-ribosomal RNA by the RNA exosome. The RNA exosome may be involved in Ig class switch recombination (CSR) and/or Ig variable region somatic hypermutation (SHM) by targeting AICDA deamination activity to transcribed dsDNA substrates. In the cytoplasm, the RNA exosome complex is involved in general mRNA turnover and specifically degrades inherently unstable mRNAs containing AU-rich elements (AREs) within their 3' untranslated regions, and in RNA surveillance pathways, preventing translation of aberrant mRNAs. It seems to be involved in degradation of histone mRNA. EXOSC10 is required for nucleolar localization of C1D and probably mediates the association of MTREX, C1D and MPHOSPH6 with the RNA exosome involved in the maturation of 5.8S rRNA. Plays a role in the recruitment of replication protein A complex (RPA) and RAD51 to DNA double-strand breaks caused by irradiation, contributing to DNA repair by homologous recombination. Regulates levels of damage-induced RNAs in order to prevent DNA-RNA hybrid formation at DNA double-strand breaks and limit DNA end resection after damage. Plays a role in oocyte development, maturation and survival. Required for normal testis development and mitotic division of spermatogonia. Plays a role in proper embryo development. Required for global protein translation. Required for cell proliferation. Regulates metabolism of C9orf72-derived repeat RNA that can be translated into toxic dipeptide repeat proteins. This is Exosome complex component 10 from Homo sapiens (Human).